The sequence spans 703 residues: Polyribonucleotide nucleotidyltransferase (703 aa).

Mg(2+)-binding residues include Asp488 and Asp494. Residues 555–614 (PRLYVMKINPEKIRDVIGKGGAVIRALTEETGTQINIEEDGTITIASNDSAKADEAKRRI) enclose the KH domain. The S1 motif domain maps to 624 to 692 (GKVYEGAITK…EKGRVKLSMK (69 aa)).

Belongs to the polyribonucleotide nucleotidyltransferase family. Mg(2+) is required as a cofactor.

The protein localises to the cytoplasm. It carries out the reaction RNA(n+1) + phosphate = RNA(n) + a ribonucleoside 5'-diphosphate. Functionally, involved in mRNA degradation. Catalyzes the phosphorolysis of single-stranded polyribonucleotides processively in the 3'- to 5'-direction. This Polaromonas naphthalenivorans (strain CJ2) protein is Polyribonucleotide nucleotidyltransferase.